A 764-amino-acid chain; its full sequence is 5-methyltetrahydropteroyltriglutamate--homocysteine methyltransferase (764 aa).

Residues 16-19 (RELK) and lysine 115 each bind 5-methyltetrahydropteroyltri-L-glutamate. Residues 435 to 437 (IGS) and glutamate 488 contribute to the L-homocysteine site. Residues 435 to 437 (IGS) and glutamate 488 each bind L-methionine. 5-methyltetrahydropteroyltri-L-glutamate-binding positions include 519–520 (RC) and tryptophan 565. Aspartate 603 serves as a coordination point for L-homocysteine. An L-methionine-binding site is contributed by aspartate 603. Glutamate 609 is a 5-methyltetrahydropteroyltri-L-glutamate binding site. 3 residues coordinate Zn(2+): histidine 645, cysteine 647, and glutamate 669. Histidine 698 serves as the catalytic Proton donor. Cysteine 730 contributes to the Zn(2+) binding site.

Belongs to the vitamin-B12 independent methionine synthase family. It depends on Zn(2+) as a cofactor.

The enzyme catalyses 5-methyltetrahydropteroyltri-L-glutamate + L-homocysteine = tetrahydropteroyltri-L-glutamate + L-methionine. It participates in amino-acid biosynthesis; L-methionine biosynthesis via de novo pathway; L-methionine from L-homocysteine (MetE route): step 1/1. Functionally, catalyzes the transfer of a methyl group from 5-methyltetrahydrofolate to homocysteine resulting in methionine formation. The chain is 5-methyltetrahydropteroyltriglutamate--homocysteine methyltransferase from Burkholderia pseudomallei (strain 668).